Reading from the N-terminus, the 340-residue chain is tRNA N6-adenosine threonylcarbamoyltransferase (340 aa).

Positions 115 and 119 each coordinate Fe cation. Substrate contacts are provided by residues 138–142 (VVSGG), Asp171, Gly184, Asp188, and Asn278. Asp306 contacts Fe cation.

Belongs to the KAE1 / TsaD family. The cofactor is Fe(2+).

It localises to the cytoplasm. The catalysed reaction is L-threonylcarbamoyladenylate + adenosine(37) in tRNA = N(6)-L-threonylcarbamoyladenosine(37) in tRNA + AMP + H(+). Its function is as follows. Required for the formation of a threonylcarbamoyl group on adenosine at position 37 (t(6)A37) in tRNAs that read codons beginning with adenine. Is involved in the transfer of the threonylcarbamoyl moiety of threonylcarbamoyl-AMP (TC-AMP) to the N6 group of A37, together with TsaE and TsaB. TsaD likely plays a direct catalytic role in this reaction. The protein is tRNA N6-adenosine threonylcarbamoyltransferase of Clostridium botulinum (strain Hall / ATCC 3502 / NCTC 13319 / Type A).